The chain runs to 239 residues: Transcriptional regulatory protein BtsR (239 aa).

In terms of domain architecture, Response regulatory spans Lys3–Arg116. The residue at position 54 (Asp54) is a 4-aspartylphosphate. An HTH LytTR-type domain is found at Ile137–Leu239.

Phosphorylated by BtsS.

Its function is as follows. Member of the two-component regulatory system BtsS/BtsR. BtsR regulates expression of btsT by binding to its promoter region. The chain is Transcriptional regulatory protein BtsR from Shigella flexneri.